The sequence spans 684 residues: MVFPRLVATGRRGSAGGSDHVVELGLEIESPPCVLYGPPTESAGALLSGLVTVHVQGAGAEAGGCVVARLTLVLEQQVTYGRPFVAGPLGSCAACRERRRELARWEVVAQAAELAGGRHAYPFSHLLAGELPATSTLGSAGATQIRYELVADAVYRAGGGEERRRELRLPVLVTRSILRGPDRNSLRVFPPTDVTATAVLPSVIYPRSTIPLELQLGGVCCADRRWRMRRLTWRIDEKVRVRSHACAAHRARLRALEEEVRAKTARNLKKPAKPIKRTPDMGPQVTVSVATVEDPLPFDAGSAAARQEADVGNMDDDADTQSAFIHPSDHAMQQELQELQARIRQQQLEEERKQETSHYIEEVRTIAGTDIRSGWKSDFSGSGKIELVMEIDCMKLNSGVTNPVNMVSTTSPYLARGQAPVNVTCDVEDPTLGISVNHLLLVEIIVAEEMLHYTNGQLLSKGEAQGEGEGQGEALAEAKPAGLAGSHADQRLAELSPMFANRNNSMFRASAEEHSPGLEPDGSTAGADKRIVGTPTGAARVLRMQFKLTMTERSGLGISWDDEVPPKYQQVKFLYPPSYDEAVSASVSEVSGSSRVVSGPESNPAVRAPVAASPTQPPAVREGPSSLGTSGSAARDMMFISESSTLCIGGESPSALPAVEDASLGHRVCVRKVSELLDTDRITQ.

Disordered regions lie at residues 462 to 483, 510 to 531, and 593 to 632; these read GEAQ…PAGL, SAEE…DKRI, and SSRV…TSGS. Positions 593-602 are enriched in low complexity; sequence SSRVVSGPES.

Belongs to the LDB19 family.

The protein resides in the cytoplasm. It is found in the golgi apparatus. Its function is as follows. May be involved in protein-linked oligosaccharide phosphorylation. In Eremothecium gossypii (strain ATCC 10895 / CBS 109.51 / FGSC 9923 / NRRL Y-1056) (Yeast), this protein is Protein LDB19 (LDB19).